The chain runs to 198 residues: Recombination protein RecR (198 aa).

The segment at 57 to 72 adopts a C4-type zinc-finger fold; it reads CSICGNLTESDPCAIC. Positions 80–175 constitute a Toprim domain; it reads TTILVVEESK…KVTRLARGLA (96 aa).

The protein belongs to the RecR family.

Functionally, may play a role in DNA repair. It seems to be involved in an RecBC-independent recombinational process of DNA repair. It may act with RecF and RecO. This chain is Recombination protein RecR, found in Lactococcus lactis subsp. cremoris (strain MG1363).